The sequence spans 108 residues: Large ribosomal subunit protein uL24 (108 aa).

The protein belongs to the universal ribosomal protein uL24 family. In terms of assembly, part of the 50S ribosomal subunit.

One of two assembly initiator proteins, it binds directly to the 5'-end of the 23S rRNA, where it nucleates assembly of the 50S subunit. Its function is as follows. One of the proteins that surrounds the polypeptide exit tunnel on the outside of the subunit. This chain is Large ribosomal subunit protein uL24, found in Geobacter metallireducens (strain ATCC 53774 / DSM 7210 / GS-15).